Consider the following 320-residue polypeptide: Histidine decarboxylase proenzyme (320 aa).

Residues 2–11 (NKNLEANRNR) constitute a propeptide that is removed on maturation. Ser98 is subject to Pyruvic acid (Ser). Glu215 serves as the catalytic Proton donor.

The proenzyme is a hexamer of identical pi chains; each pi chain monomer is cleaved to form a small (or beta) chain and a large (or alpha) chain by non-hydrolytic self-catalysis. It depends on pyruvate as a cofactor.

The enzyme catalyses L-histidine + H(+) = histamine + CO2. This Clostridium perfringens (strain ATCC 13124 / DSM 756 / JCM 1290 / NCIMB 6125 / NCTC 8237 / Type A) protein is Histidine decarboxylase proenzyme (hdc).